A 309-amino-acid polypeptide reads, in one-letter code: MRKTITVIAVLIVLALIGVGIVQYVNTSDDSDFIGQPGEPTGTETTEPPVQPDWCPAVEVIAAPGTWESAANDDPINPTANPLSFMLSITQPLQERYSADDVKVWTLPYTAQFRNINSQNEMSYDDSRNEGTAKMNEELINTHNECPATEFIIVGFSQGAVIAGDVAAQIGSEQGVIPADSVRGVALIADGRREPGVGQFPGTFVDGIGAEVTLQPLNLLVQPIVPGATMRGGRAGGFGVLNDRVQDICAPNDAICDAPVNVGNALDRALAMVSANGVHALYATNPDVFPGTTTNAWVVDWATNLIDNG.

The helical transmembrane segment at 5 to 25 (ITVIAVLIVLALIGVGIVQYV) threads the bilayer. Cys-55 and Cys-146 are disulfide-bonded. Catalysis depends on residues Ser-157, Asp-253, and His-279. Cys-249 and Cys-256 form a disulfide bridge.

This sequence belongs to the cutinase family.

It is found in the cell membrane. It catalyses the reaction a butanoate ester + H2O = an aliphatic alcohol + butanoate + H(+). Inhibited by tetrahydrolipstatin (THL), a specific lipase inhibitor. Functionally, esterase that may be involved in cell wall biosynthesis and/or maintenance. Hydrolyzes pNP-butyrate (C4). This chain is Carboxylesterase Culp6 homolog, found in Corynebacterium glutamicum (strain ATCC 13032 / DSM 20300 / JCM 1318 / BCRC 11384 / CCUG 27702 / LMG 3730 / NBRC 12168 / NCIMB 10025 / NRRL B-2784 / 534).